A 932-amino-acid chain; its full sequence is Protocadherin gamma-A8 (932 aa).

Positions 1–29 (MAAPQSRPRRGELILLCALLGTLWEIGRG) are cleaved as a signal peptide. 6 Cadherin domains span residues 30 to 133 (QIRY…NPKF), 134 to 242 (QVED…APVF), 243 to 347 (PHPI…RPEV), 348 to 452 (IITS…PPTF), 453 to 562 (PHAS…APEI), and 570 to 682 (DGST…KPSV). At 30–692 (QIRYSVPEET…DPNDSSLTLY (663 aa)) the chain is on the extracellular side. N-linked (GlcNAc...) asparagine glycosylation is present at N47. N414, N419, and N545 each carry an N-linked (GlcNAc...) asparagine glycan. N-linked (GlcNAc...) asparagine glycosylation occurs at N685. A helical transmembrane segment spans residues 693 to 713 (LVVAVAAISCVFLAFVAVLLG). The Cytoplasmic segment spans residues 714–932 (LRLRRWHKSR…KKKSGKKEKK (219 aa)). Disordered regions lie at residues 804–841 (ADHGQQAPPNTDWRFSQAQRPGTSGSQNGDDTGTWPNN) and 902–932 (ATLTNAAGKRDGKAPAGGNGNKKKSGKKEKK). A compositionally biased stretch (polar residues) spans 810–841 (APPNTDWRFSQAQRPGTSGSQNGDDTGTWPNN). The span at 922-932 (NKKKSGKKEKK) shows a compositional bias: basic residues.

The protein localises to the cell membrane. Functionally, potential calcium-dependent cell-adhesion protein. May be involved in the establishment and maintenance of specific neuronal connections in the brain. This chain is Protocadherin gamma-A8 (PCDHGA8), found in Homo sapiens (Human).